We begin with the raw amino-acid sequence, 312 residues long: Ribosomal protein L11 methyltransferase (312 aa).

4 residues coordinate S-adenosyl-L-methionine: Thr-162, Gly-183, Asp-205, and Asn-248.

The protein belongs to the methyltransferase superfamily. PrmA family.

The protein localises to the cytoplasm. It catalyses the reaction L-lysyl-[protein] + 3 S-adenosyl-L-methionine = N(6),N(6),N(6)-trimethyl-L-lysyl-[protein] + 3 S-adenosyl-L-homocysteine + 3 H(+). Methylates ribosomal protein L11. This is Ribosomal protein L11 methyltransferase from Bacillus cytotoxicus (strain DSM 22905 / CIP 110041 / 391-98 / NVH 391-98).